Here is a 444-residue protein sequence, read N- to C-terminus: UDP-N-acetylglucosamine 1-carboxyvinyltransferase (444 aa).

Residue 22-23 coordinates phosphoenolpyruvate; that stretch reads KN. Arg-94 contributes to the UDP-N-acetyl-alpha-D-glucosamine binding site. The active-site Proton donor is Asp-119. Residues Asp-309 and Val-331 each coordinate UDP-N-acetyl-alpha-D-glucosamine.

It belongs to the EPSP synthase family. MurA subfamily.

The protein localises to the cytoplasm. It carries out the reaction phosphoenolpyruvate + UDP-N-acetyl-alpha-D-glucosamine = UDP-N-acetyl-3-O-(1-carboxyvinyl)-alpha-D-glucosamine + phosphate. The protein operates within cell wall biogenesis; peptidoglycan biosynthesis. Functionally, cell wall formation. Adds enolpyruvyl to UDP-N-acetylglucosamine. In Chlamydia trachomatis serovar A (strain ATCC VR-571B / DSM 19440 / HAR-13), this protein is UDP-N-acetylglucosamine 1-carboxyvinyltransferase.